Here is a 121-residue protein sequence, read N- to C-terminus: Probable K(+)/H(+) antiporter subunit G (121 aa).

The next 3 membrane-spanning stretches (helical) occupy residues 10–32, 45–67, and 72–94; these read WAALLVCGLMLVGAATTLIGSLG, APTIATSGGTILLCLASILCFAV, and WVFHEVLIIFFVTVTTPVTLMLL.

This sequence belongs to the CPA3 antiporters (TC 2.A.63) subunit G family. As to quaternary structure, may form a hetero-oligomeric complex that consists of six subunits: PhaAB, PhaC, PhaD, PhaE, PhaF and PhaG.

It is found in the cell membrane. Functionally, part of a K(+) efflux system which is required for the adaptation of R.meliloti to alkaline pH as well as for the infection process during symbiotic nodule development. This chain is Probable K(+)/H(+) antiporter subunit G (phaG), found in Rhizobium meliloti (strain 1021) (Ensifer meliloti).